The sequence spans 312 residues: Small ribosomal subunit protein uS2m (312 aa).

Belongs to the universal ribosomal protein uS2 family.

Its subcellular location is the mitochondrion. The protein is Small ribosomal subunit protein uS2m (RPS2) of Acanthamoeba castellanii (Amoeba).